The sequence spans 257 residues: MSLIDIQNLTIKNTSEKSLIKGIDLKIYNQQINALIGESGAGKSLIAKALLEYLPFDLTCTYDSYQFDGENVSRLSQYYGHTIGYIYQNYAESFNDHTKLGKQLTAIYRKHYKSCKEEALSKIDKALSWVNLQSKDILNKYSFQLSGGQLERVYIASVLMLKPKLIIADEPVASLDALNGNQVMDLLQHIVLEHGQTLFIITHNLSHVLKYCQYIYVLKEGQIIERGNINHFKYEHLHPYTERLIKYRTQLKRDYYD.

The region spanning 4 to 245 (IDIQNLTIKN…HLHPYTERLI (242 aa)) is the ABC transporter domain. 37-44 (GESGAGKS) provides a ligand contact to ATP.

It belongs to the ABC transporter superfamily. In terms of assembly, the complex is composed of two ATP-binding proteins (NikD and NikE), two transmembrane proteins (NikB and NikC) and a solute-binding protein (NikA).

It is found in the cell membrane. It carries out the reaction Ni(2+)(out) + ATP + H2O = Ni(2+)(in) + ADP + phosphate + H(+). Its function is as follows. Part of the ABC transporter complex NikABCDE (Opp2) involved in nickel import. Probably responsible for energy coupling to the transport system. This Staphylococcus aureus (strain MRSA252) protein is Nickel import system ATP-binding protein NikD.